The chain runs to 100 residues: Protein translation factor SUI1 homolog (100 aa).

The protein belongs to the SUI1 family.

This Thermoplasma volcanium (strain ATCC 51530 / DSM 4299 / JCM 9571 / NBRC 15438 / GSS1) protein is Protein translation factor SUI1 homolog.